A 662-amino-acid polypeptide reads, in one-letter code: MDDTSGTEGDECSELERAGGWFMVEAIVDRRTGDKPSSDEDEDEDADEGEDFVDFIDDRPVGDGQEVAQELLLQQAAADDDVAVQAVKRKFAPSPYFSPVCMQPSIENELSPRLDAIKLGRQSGTAKRRLFQLPDSGYGQTQVDTESGPLQVQDICETGTQDGRQDADEGSGRNVGGNGGQEEERAGGDGEESQTQGVQTDKAACGVLAILRASNQKATLLGKFKEQFGLGFNELIRHFKSSKTVCLDWVVCVFGVYCTLAEGIKTLIQPQCDYAHIQVLSCQWGMTVLMLVRYKRAKNRETVAKGLSTLLNVPESHMLIEPPKLRSGPAALYWYKTAMSNCSDVYGETPEWIVRQTMVGHALEEAQFSLSEMVQYAYDHDITDESMLAFEYALLADTDANAAAFLSSNCQAKYVKDACTMCRHYKRGEQARMNMSEWIWFRGDKVQGDGDWKPIVQFLRYHDVEFIPFLCAFKTFLQGIPKKSCLVFYGPADTGKSYFCMSLLRFLGGVVISYANSNSHFWLQPLADAKIGLLDDATSQCWCYIDTYLRNALDGNQVCIDRKHRALLQLKCPPLLITTNINPLEDDRWKYLRSRVQLFTFKNKFPLTTQGEPLYTLNDQNWKCFFRRLWARLSLTDPDDEEENGNPSEPFRCVPGQNARTL.

The span at valine 28–serine 38 shows a compositional bias: basic and acidic residues. The segment at valine 28 to proline 60 is disordered. The segment covering aspartate 39 to phenylalanine 55 has biased composition (acidic residues). Positions lysine 88–lysine 90 match the Nuclear localization signal motif. Serine 94, serine 98, and serine 111 each carry phosphoserine; by host. A Nuclear export signal motif is present at residues leucine 110–leucine 119. Residues threonine 160–glycine 197 are disordered. Residues glutamine 199–glutamate 365 form a DNA-binding region region. The SF3 helicase domain maps to valine 464–leucine 614. Glycine 490–serine 497 contributes to the ATP binding site. A Glycyl lysine isopeptide (Lys-Gly) (interchain with G-Cter in SUMO) cross-link involves residue lysine 571. Residues aspartate 637–leucine 662 form a disordered region.

Belongs to the papillomaviridae E1 protein family. As to quaternary structure, can form hexamers. Interacts with E2 protein; this interaction increases E1 DNA binding specificity. Interacts with host DNA polymerase subunit POLA2. Interacts with host single stranded DNA-binding protein RPA1. Interacts with host TOP1; this interaction stimulates the enzymatic activity of TOP1. In terms of processing, phosphorylated. Post-translationally, sumoylated.

Its subcellular location is the host nucleus. It catalyses the reaction Couples ATP hydrolysis with the unwinding of duplex DNA by translocating in the 3'-5' direction.. The catalysed reaction is ATP + H2O = ADP + phosphate + H(+). In terms of biological role, ATP-dependent DNA 3'-5' helicase required for initiation of viral DNA replication. It forms a complex with the viral E2 protein. The E1-E2 complex binds to the replication origin which contains binding sites for both proteins. During the initial step, a dimer of E1 interacts with a dimer of protein E2 leading to a complex that binds the viral origin of replication with high specificity. Then, a second dimer of E1 displaces the E2 dimer in an ATP-dependent manner to form the E1 tetramer. Following this, two E1 monomers are added to each half of the site, which results in the formation of two E1 trimers on the viral ori. Subsequently, two hexamers will be created. The double hexamer acts as a bi-directional helicase machinery and unwinds the viral DNA and then recruits the host DNA polymerase to start replication. The protein is Replication protein E1 of Homo sapiens (Human).